Here is an 829-residue protein sequence, read N- to C-terminus: Leucine--tRNA ligase (829 aa).

The 'HIGH' region signature appears at 40–51 (PYPSGAGLHVGH). A 'KMSKS' region motif is present at residues 609 to 613 (KMSKS). Lys-612 contacts ATP.

This sequence belongs to the class-I aminoacyl-tRNA synthetase family.

The protein resides in the cytoplasm. It catalyses the reaction tRNA(Leu) + L-leucine + ATP = L-leucyl-tRNA(Leu) + AMP + diphosphate. The chain is Leucine--tRNA ligase from Lactococcus lactis subsp. lactis (strain IL1403) (Streptococcus lactis).